Consider the following 126-residue polypeptide: Holo-[acyl-carrier-protein] synthase (126 aa).

Asp9 and Glu58 together coordinate Mg(2+).

The protein belongs to the P-Pant transferase superfamily. AcpS family. The cofactor is Mg(2+).

It localises to the cytoplasm. It carries out the reaction apo-[ACP] + CoA = holo-[ACP] + adenosine 3',5'-bisphosphate + H(+). Its function is as follows. Transfers the 4'-phosphopantetheine moiety from coenzyme A to a Ser of acyl-carrier-protein. The sequence is that of Holo-[acyl-carrier-protein] synthase from Photobacterium profundum (strain SS9).